The following is a 246-amino-acid chain: tRNA (guanine-N(1)-)-methyltransferase (246 aa).

S-adenosyl-L-methionine is bound by residues G112 and 131-136 (IGDYVL).

Belongs to the RNA methyltransferase TrmD family. In terms of assembly, homodimer.

Its subcellular location is the cytoplasm. It carries out the reaction guanosine(37) in tRNA + S-adenosyl-L-methionine = N(1)-methylguanosine(37) in tRNA + S-adenosyl-L-homocysteine + H(+). Functionally, specifically methylates guanosine-37 in various tRNAs. This chain is tRNA (guanine-N(1)-)-methyltransferase, found in Thermosipho melanesiensis (strain DSM 12029 / CIP 104789 / BI429).